The following is a 463-amino-acid chain: ATP synthase subunit beta (463 aa).

Residue 152–159 coordinates ATP; the sequence is GGAGVGKT.

The protein belongs to the ATPase alpha/beta chains family. F-type ATPases have 2 components, CF(1) - the catalytic core - and CF(0) - the membrane proton channel. CF(1) has five subunits: alpha(3), beta(3), gamma(1), delta(1), epsilon(1). CF(0) has three main subunits: a(1), b(2) and c(9-12). The alpha and beta chains form an alternating ring which encloses part of the gamma chain. CF(1) is attached to CF(0) by a central stalk formed by the gamma and epsilon chains, while a peripheral stalk is formed by the delta and b chains.

It localises to the cell inner membrane. The catalysed reaction is ATP + H2O + 4 H(+)(in) = ADP + phosphate + 5 H(+)(out). Functionally, produces ATP from ADP in the presence of a proton gradient across the membrane. The catalytic sites are hosted primarily by the beta subunits. This chain is ATP synthase subunit beta, found in Shewanella denitrificans (strain OS217 / ATCC BAA-1090 / DSM 15013).